A 129-amino-acid chain; its full sequence is Small ribosomal subunit protein uS11 (129 aa).

This sequence belongs to the universal ribosomal protein uS11 family. As to quaternary structure, part of the 30S ribosomal subunit. Interacts with proteins S7 and S18. Binds to IF-3.

Located on the platform of the 30S subunit, it bridges several disparate RNA helices of the 16S rRNA. Forms part of the Shine-Dalgarno cleft in the 70S ribosome. This Thermosipho africanus (strain TCF52B) protein is Small ribosomal subunit protein uS11.